We begin with the raw amino-acid sequence, 264 residues long: Thymidylate synthase (264 aa).

Position 21 (R21) interacts with dUMP. Residue H51 coordinates (6R)-5,10-methylene-5,6,7,8-tetrahydrofolate. 126–127 is a dUMP binding site; the sequence is RR. The active-site Nucleophile is C146. Residues 166-169, N177, and 207-209 each bind dUMP; these read RSAD and HLY. Residue D169 coordinates (6R)-5,10-methylene-5,6,7,8-tetrahydrofolate. (6R)-5,10-methylene-5,6,7,8-tetrahydrofolate is bound at residue A263.

The protein belongs to the thymidylate synthase family. Bacterial-type ThyA subfamily. As to quaternary structure, homodimer.

It localises to the cytoplasm. The enzyme catalyses dUMP + (6R)-5,10-methylene-5,6,7,8-tetrahydrofolate = 7,8-dihydrofolate + dTMP. It functions in the pathway pyrimidine metabolism; dTTP biosynthesis. In terms of biological role, catalyzes the reductive methylation of 2'-deoxyuridine-5'-monophosphate (dUMP) to 2'-deoxythymidine-5'-monophosphate (dTMP) while utilizing 5,10-methylenetetrahydrofolate (mTHF) as the methyl donor and reductant in the reaction, yielding dihydrofolate (DHF) as a by-product. This enzymatic reaction provides an intracellular de novo source of dTMP, an essential precursor for DNA biosynthesis. The sequence is that of Thymidylate synthase from Legionella pneumophila (strain Lens).